A 461-amino-acid polypeptide reads, in one-letter code: MLKIFNTLTRQKEEFKPIHAGEVGMYVCGITVYDLCHIGHGRTFVAFDVVARYLRFLGYKLKYVRNITDIDDKIIKRANENGESFVALVDRMIAEMHKDFDALNILRPDMEPRATHHIAEIIELTEQLIAKGHAYVADNGDVMFDVPTDPTYGVLSRQDLDQLQAGARVDVVDDKRNPMDFVLWKMSKEGEPSWPSPWGAGRPGWHIECSAMNCKQLGNHFDIHGGGSDLMFPHHENEIAQSTCAHDGRYVNYWMHSGMVMVDREKMSKSLGNFFTVRDVLKYYDAETVRYFLMSGHYRSQLNYSEENLKQARAALERLYTALRGTDKTVAPAGGEAFEARFIEAMDDDFNTPEAYSVLFDMAREVNRLKAEDMAAANAMASHLRKLSAVLGLLEQEPEAFLQSGAQADDSEVAEIEALIQQRLDARKAKDWAAADAARDRLNEMGIVLEDGPQGTTWRRK.

C28 provides a ligand contact to Zn(2+). Residues 30–40 (ITVYDLCHIGH) carry the 'HIGH' region motif. Residues C209, H234, and E238 each coordinate Zn(2+). The 'KMSKS' region signature appears at 266-270 (KMSKS). Residue K269 participates in ATP binding.

Belongs to the class-I aminoacyl-tRNA synthetase family. Monomer. It depends on Zn(2+) as a cofactor.

The protein resides in the cytoplasm. The catalysed reaction is tRNA(Cys) + L-cysteine + ATP = L-cysteinyl-tRNA(Cys) + AMP + diphosphate. The sequence is that of Cysteine--tRNA ligase from Escherichia coli O127:H6 (strain E2348/69 / EPEC).